The chain runs to 89 residues: Small ribosomal subunit protein uS15 (89 aa).

It belongs to the universal ribosomal protein uS15 family. As to quaternary structure, part of the 30S ribosomal subunit. Forms a bridge to the 50S subunit in the 70S ribosome, contacting the 23S rRNA.

Functionally, one of the primary rRNA binding proteins, it binds directly to 16S rRNA where it helps nucleate assembly of the platform of the 30S subunit by binding and bridging several RNA helices of the 16S rRNA. In terms of biological role, forms an intersubunit bridge (bridge B4) with the 23S rRNA of the 50S subunit in the ribosome. This chain is Small ribosomal subunit protein uS15, found in Chlorobium phaeobacteroides (strain DSM 266 / SMG 266 / 2430).